The primary structure comprises 205 residues: Urease accessory protein UreG (205 aa).

Residue 14-21 participates in GTP binding; it reads GPVGSGKT.

It belongs to the SIMIBI class G3E GTPase family. UreG subfamily. As to quaternary structure, homodimer. UreD, UreF and UreG form a complex that acts as a GTP-hydrolysis-dependent molecular chaperone, activating the urease apoprotein by helping to assemble the nickel containing metallocenter of UreC. The UreE protein probably delivers the nickel.

It is found in the cytoplasm. In terms of biological role, facilitates the functional incorporation of the urease nickel metallocenter. This process requires GTP hydrolysis, probably effectuated by UreG. The polypeptide is Urease accessory protein UreG (Enterobacter sp. (strain 638)).